The primary structure comprises 133 residues: MAEKPAAKPKAAAAKAEAKDQSDSYAIVEASGQQFWLQPNRYYDLDRLQAAVDDTVTLENVLLIKDGKNDTTVGQPYVKGASVELKVMDHRRGPKIIVYKMRPKKKTRRKNGHRQELTRVMVQSISIDGKALS.

Residues 1–22 (MAEKPAAKPKAAAAKAEAKDQS) are disordered.

It belongs to the bacterial ribosomal protein bL21 family. Part of the 50S ribosomal subunit. Contacts protein L20.

In terms of biological role, this protein binds to 23S rRNA in the presence of protein L20. The protein is Large ribosomal subunit protein bL21 of Prochlorococcus marinus (strain MIT 9303).